Here is a 159-residue protein sequence, read N- to C-terminus: S-ribosylhomocysteine lyase (159 aa).

Residues H53, H57, and C124 each contribute to the Fe cation site.

It belongs to the LuxS family. As to quaternary structure, homodimer. Fe cation is required as a cofactor.

It catalyses the reaction S-(5-deoxy-D-ribos-5-yl)-L-homocysteine = (S)-4,5-dihydroxypentane-2,3-dione + L-homocysteine. Involved in the synthesis of autoinducer 2 (AI-2) which is secreted by bacteria and is used to communicate both the cell density and the metabolic potential of the environment. The regulation of gene expression in response to changes in cell density is called quorum sensing. Catalyzes the transformation of S-ribosylhomocysteine (RHC) to homocysteine (HC) and 4,5-dihydroxy-2,3-pentadione (DPD). This Porphyromonas gingivalis (strain ATCC 33277 / DSM 20709 / CIP 103683 / JCM 12257 / NCTC 11834 / 2561) protein is S-ribosylhomocysteine lyase.